Here is a 119-residue protein sequence, read N- to C-terminus: Urease subunit beta (119 aa).

This sequence belongs to the urease beta subunit family. Heterotrimer of UreA (gamma), UreB (beta) and UreC (alpha) subunits. Three heterotrimers associate to form the active enzyme.

It is found in the cytoplasm. The enzyme catalyses urea + 2 H2O + H(+) = hydrogencarbonate + 2 NH4(+). The protein operates within nitrogen metabolism; urea degradation; CO(2) and NH(3) from urea (urease route): step 1/1. This chain is Urease subunit beta, found in Tolumonas auensis (strain DSM 9187 / NBRC 110442 / TA 4).